Reading from the N-terminus, the 72-residue chain is Conotoxin Gla(2)-TxVI/A (72 aa).

The signal sequence occupies residues 1–19; the sequence is MQKLIILLLVAAVLMSTQA. Positions 20 to 44 are excised as a propeptide; it reads LFQEKRPMKKIDFLSKGKTDAEKQQ. Intrachain disulfides connect C48-C62, C55-C66, and C61-C70. E56 is modified (4-carboxyglutamate). P58 is subject to 4-hydroxyproline. S71 bears the Serine amide mark.

The protein belongs to the conotoxin O2 superfamily. Brominated at one of the Trp residues. As to expression, expressed by the venom duct.

It is found in the secreted. This Conus textile (Cloth-of-gold cone) protein is Conotoxin Gla(2)-TxVI/A.